Consider the following 87-residue polypeptide: uncharacterized protein (87 aa).

This is an uncharacterized protein from Methanocaldococcus jannaschii (strain ATCC 43067 / DSM 2661 / JAL-1 / JCM 10045 / NBRC 100440) (Methanococcus jannaschii).